The following is a 202-amino-acid chain: Prephenate decarboxylase (202 aa).

Belongs to the prephenate decarboxylase family.

The catalysed reaction is prephenate + H(+) = 3-[(4R)-4-hydroxycyclohexa-1,5-dien-1-yl]-2-oxopropanoate + CO2. Its function is as follows. In vivo, involved in the biosynthesis of 2-carboxy-6-hydroxyoctahydroindole (Choi) present in the nonribosomal glycopeptides aeruginoside 126A and B. AerD is an unusual prephenate decarboxylase that avoids the typical aromatization of the cyclohexadienol ring of prephenate. AerD catalyzes the protonation at C8 followed by decarboxylation to produce the dihydro-4-hydroxyphenylpyruvate regioisomer A258 (H2HPP A258)(3-(4-hydroxycyclohexa- 1,5-dienyl)-2-oxopropanoic acid), which is able to undergo a nonenzymatic isomerization to produce dihydro-4-hydroxyphenylpyruvate regioisomer A295 (H2HPP A295)(3-(4-hydroxycyclohex-2-enylidene)-2-oxopropanoic acid). This is Prephenate decarboxylase from Planktothrix agardhii (strain NIVA-CYA 126/8).